A 157-amino-acid polypeptide reads, in one-letter code: ATP synthase subunit b', chloroplastic (157 aa).

Residues 26 to 43 (LMASQFLLIMLILDITFY) traverse the membrane as a helical segment.

Belongs to the ATPase B chain family. As to quaternary structure, F-type ATPases have 2 components, F(1) - the catalytic core - and F(0) - the membrane proton channel. F(1) has five subunits: alpha(3), beta(3), gamma(1), delta(1), epsilon(1). F(0) has four main subunits: a(1), b(1), b'(1) and c(10-14). The alpha and beta chains form an alternating ring which encloses part of the gamma chain. F(1) is attached to F(0) by a central stalk formed by the gamma and epsilon chains, while a peripheral stalk is formed by the delta, b and b' chains.

It is found in the plastid. The protein localises to the chloroplast thylakoid membrane. Functionally, f(1)F(0) ATP synthase produces ATP from ADP in the presence of a proton or sodium gradient. F-type ATPases consist of two structural domains, F(1) containing the extramembraneous catalytic core and F(0) containing the membrane proton channel, linked together by a central stalk and a peripheral stalk. During catalysis, ATP synthesis in the catalytic domain of F(1) is coupled via a rotary mechanism of the central stalk subunits to proton translocation. Its function is as follows. Component of the F(0) channel, it forms part of the peripheral stalk, linking F(1) to F(0). The b'-subunit is a diverged and duplicated form of b found in plants and photosynthetic bacteria. The polypeptide is ATP synthase subunit b', chloroplastic (Cyanidium caldarium (Red alga)).